Consider the following 388-residue polypeptide: Transcription factor SOX-7 (388 aa).

Disordered regions lie at residues D20 to R46 and R140 to Y197. Composition is skewed to basic and acidic residues over residues P36–I45 and P146–E164. A DNA-binding region (HMG box) is located at residues I45–K113. The Sox C-terminal domain occupies V268 to S388.

Interacts with CTNNB1/beta-catenin; this interaction may lead to the proteasomal degradation of active CTNNB1 and thus inhibition of Wnt/beta-catenin-stimulated transcription. As to expression, widely expressed in adult and fetal tissues. Present both in mesenchymal and epithelial cells in some adult tissues, including colon. Tends to be down-regulated in prostate adenocarcinomas and colorectal tumors due to promoter hypermethylation.

The protein localises to the nucleus. The protein resides in the cytoplasm. In terms of biological role, binds to and activates the CDH5 promoter, hence plays a role in the transcriptional regulation of genes expressed in the hemogenic endothelium and blocks further differentiation into blood precursors. May be required for the survival of both hematopoietic and endothelial precursors during specification. Competes with GATA4 for binding and activation of the FGF3 promoter. Represses Wnt/beta-catenin-stimulated transcription, probably by targeting CTNNB1 to proteasomal degradation. Binds the DNA sequence 5'-AACAAT-3'. This is Transcription factor SOX-7 (SOX7) from Homo sapiens (Human).